A 413-amino-acid chain; its full sequence is MDHLKRQDEKVFAAIEAELGRQRSKIELIASENFVSEAVMEAQGSVLTNKYAEGYPGKRYYGGCEHVDVVEDIARDRVKEIFGAEHVNVQPHSGAQANMAVYFTILEQGDTVLGMNLSHGGHLTHGSPVNFSGVQYNFVEYGVDADSHRINYDDVLAKAKEHKPKLIVAGASAYPRVIDFKRFREIADEVGAYLMVDMAHIAGLVAAGLHPNPVPHAHFVTTTTHKTLRGPRGGMILCEEKFAKQIDKSIFPGIQGGPLMHVIAAKAVAFGETLQEDFKTYAQNIINNANRLAEGLQKEGLTLVSGGTDNHLILIDVRNLEITGKVAEHVLDEVGITVNKNTIPFETASPFVTSGVRIGTAAVTSRGFGLEEMDEIASLIAYTLKNHENEAALEEARKRVEALTSKFSMYPNL.

Residues L117 and 121–123 (GHL) contribute to the (6S)-5,6,7,8-tetrahydrofolate site. Position 226 is an N6-(pyridoxal phosphate)lysine (K226). (6S)-5,6,7,8-tetrahydrofolate-binding positions include E239 and 349–351 (SPF).

This sequence belongs to the SHMT family. In terms of assembly, homodimer. It depends on pyridoxal 5'-phosphate as a cofactor.

The protein localises to the cytoplasm. It carries out the reaction (6R)-5,10-methylene-5,6,7,8-tetrahydrofolate + glycine + H2O = (6S)-5,6,7,8-tetrahydrofolate + L-serine. The protein operates within one-carbon metabolism; tetrahydrofolate interconversion. It functions in the pathway amino-acid biosynthesis; glycine biosynthesis; glycine from L-serine: step 1/1. In terms of biological role, catalyzes the reversible interconversion of serine and glycine with tetrahydrofolate (THF) serving as the one-carbon carrier. This reaction serves as the major source of one-carbon groups required for the biosynthesis of purines, thymidylate, methionine, and other important biomolecules. Also exhibits THF-independent aldolase activity toward beta-hydroxyamino acids, producing glycine and aldehydes, via a retro-aldol mechanism. The chain is Serine hydroxymethyltransferase from Bacillus cereus (strain G9842).